The primary structure comprises 383 residues: Subtelomeric hrmA-associated cluster protein AFUB_078970 (383 aa).

2 disordered regions span residues 118 to 145 (NPVS…KDDD) and 249 to 318 (QATQ…SARP). The span at 119–134 (PVSEVPESPPSTVKSS) shows a compositional bias: low complexity. Residues 318-364 (PYSAAEDDILQTLVARGLAWEEIEKEFGLRFAKRTMRSLQMRWSRKL) enclose the Myb-like domain.

Myb-like domain-containing protein; part of the subtelomeric hrmA-associated cluster (HAC) containing genes that alter the hyphal surface (such as reduced total chitin or increased beta-glucan exposure) and perturb inter-hyphal interactions within the developing biofilms, resulting in a loss of vertically aligned polarized growing filaments. Consequently, this hypoxia-typic morphotype (called H-MORPH) with altered biofilm architecture leads to increased hypoxia fitness, increased host inflammation, rapid disease progression, and mortality in a murine model of invasive aspergillosis. This Aspergillus fumigatus (strain CBS 144.89 / FGSC A1163 / CEA10) (Neosartorya fumigata) protein is Subtelomeric hrmA-associated cluster protein AFUB_078970.